Consider the following 406-residue polypeptide: Cysteine desulfurase (406 aa).

K226 is modified (N6-(pyridoxal phosphate)lysine). The Cysteine persulfide intermediate role is filled by C364.

The protein belongs to the class-V pyridoxal-phosphate-dependent aminotransferase family. Csd subfamily. Homodimer. Interacts with SufE and the SufBCD complex composed of SufB, SufC and SufD. The interaction with SufE is required to mediate the direct transfer of the sulfur atom from the S-sulfanylcysteine. Pyridoxal 5'-phosphate is required as a cofactor.

The protein localises to the cytoplasm. The catalysed reaction is (sulfur carrier)-H + L-cysteine = (sulfur carrier)-SH + L-alanine. It carries out the reaction L-selenocysteine + AH2 = hydrogenselenide + L-alanine + A + H(+). It functions in the pathway cofactor biosynthesis; iron-sulfur cluster biosynthesis. Cysteine desulfurases mobilize the sulfur from L-cysteine to yield L-alanine, an essential step in sulfur metabolism for biosynthesis of a variety of sulfur-containing biomolecules. Component of the suf operon, which is activated and required under specific conditions such as oxidative stress and iron limitation. Acts as a potent selenocysteine lyase in vitro, that mobilizes selenium from L-selenocysteine. Selenocysteine lyase activity is however unsure in vivo. This is Cysteine desulfurase from Yersinia pseudotuberculosis serotype IB (strain PB1/+).